Consider the following 200-residue polypeptide: Protein GrpE (200 aa).

Over residues 1 to 23 (MEEEIKETSEDKEEENTEAEAVE) the composition is skewed to acidic residues. The tract at residues 1-39 (MEEEIKETSEDKEEENTEAEAVENNEKSEENAGNVEEDE) is disordered.

The protein belongs to the GrpE family. In terms of assembly, homodimer.

Its subcellular location is the cytoplasm. Participates actively in the response to hyperosmotic and heat shock by preventing the aggregation of stress-denatured proteins, in association with DnaK and GrpE. It is the nucleotide exchange factor for DnaK and may function as a thermosensor. Unfolded proteins bind initially to DnaJ; upon interaction with the DnaJ-bound protein, DnaK hydrolyzes its bound ATP, resulting in the formation of a stable complex. GrpE releases ADP from DnaK; ATP binding to DnaK triggers the release of the substrate protein, thus completing the reaction cycle. Several rounds of ATP-dependent interactions between DnaJ, DnaK and GrpE are required for fully efficient folding. This chain is Protein GrpE, found in Brachyspira hyodysenteriae (strain ATCC 49526 / WA1).